A 901-amino-acid chain; its full sequence is Disease resistance RPP8-like protein 3 (901 aa).

Positions 15–56 form a coiled coil; sequence ALLNRESERLNGIDEQVDGLKRQLRGLQSLLKDADAKKHGSD. The NB-ARC domain maps to 144–453; that stretch reads LQDIQREIRQ…AEGIYDGLTI (310 aa). ATP contacts are provided by residues 190-197 and 385-392; these read GMGGIGKT and GAQIVGKS. LRR repeat units lie at residues 567–591, 592–615, and 833–858; these read LPLL…SIGG, LIHL…IRNL, and MPCL…KYVT.

It belongs to the disease resistance NB-LRR family. RPP8/HRT subfamily.

Its function is as follows. Disease resistance protein. In Arabidopsis thaliana (Mouse-ear cress), this protein is Disease resistance RPP8-like protein 3 (RPP8L3).